The chain runs to 60 residues: Large ribosomal subunit protein bL32 (60 aa).

Positions 1–23 are disordered; sequence MAVPARHTSKAKKNKRRTHYKLT. Positions 7–20 are enriched in basic residues; the sequence is HTSKAKKNKRRTHY.

Belongs to the bacterial ribosomal protein bL32 family.

This Streptococcus equi subsp. equi (strain 4047) protein is Large ribosomal subunit protein bL32.